A 382-amino-acid polypeptide reads, in one-letter code: UDP-4-amino-4-deoxy-L-arabinose--oxoglutarate aminotransferase (382 aa).

N6-(pyridoxal phosphate)lysine is present on Lys182.

This sequence belongs to the DegT/DnrJ/EryC1 family. ArnB subfamily. In terms of assembly, homodimer. Requires pyridoxal 5'-phosphate as cofactor.

It carries out the reaction UDP-4-amino-4-deoxy-beta-L-arabinose + 2-oxoglutarate = UDP-beta-L-threo-pentopyranos-4-ulose + L-glutamate. Its pathway is nucleotide-sugar biosynthesis; UDP-4-deoxy-4-formamido-beta-L-arabinose biosynthesis; UDP-4-deoxy-4-formamido-beta-L-arabinose from UDP-alpha-D-glucuronate: step 2/3. It functions in the pathway bacterial outer membrane biogenesis; lipopolysaccharide biosynthesis. Functionally, catalyzes the conversion of UDP-4-keto-arabinose (UDP-Ara4O) to UDP-4-amino-4-deoxy-L-arabinose (UDP-L-Ara4N). The modified arabinose is attached to lipid A and is required for resistance to polymyxin and cationic antimicrobial peptides. In Pectobacterium carotovorum subsp. carotovorum (strain PC1), this protein is UDP-4-amino-4-deoxy-L-arabinose--oxoglutarate aminotransferase.